A 455-amino-acid chain; its full sequence is Probable transcription factor GLK1 (455 aa).

A compositionally biased stretch (low complexity) spans 145-163 (AAVEAKSSSPSSTTSSSQE). The disordered stretch occupies residues 145–183 (AAVEAKSSSPSSTTSSSQEAESRHKSSSKSSHGKKKAKV). Residues 169–181 (KSSSKSSHGKKKA) show a composition bias toward basic residues. One can recognise an HTH myb-type domain in the interval 177–236 (GKKKAKVDWTPELHRRFVQAVEQLGIDKAVPSRILEIMGIDSLTRHNIASHLQKYRSHRK). The H-T-H motif DNA-binding region spans 207-232 (PSRILEIMGIDSLTRHNIASHLQKYR).

As to expression, expressed in leaves.

The protein resides in the nucleus. Its function is as follows. Probable transcriptional activator that promotes chloroplast development. Acts as an activator of nuclear photosynthetic genes involved in chlorophyll biosynthesis, light harvesting, and electron transport. In Oryza sativa subsp. japonica (Rice), this protein is Probable transcription factor GLK1 (GLK1).